A 220-amino-acid chain; its full sequence is Uracil-DNA glycosylase (220 aa).

Catalysis depends on D60, which acts as the Proton acceptor.

The protein belongs to the uracil-DNA glycosylase (UDG) superfamily. UNG family.

It localises to the cytoplasm. It carries out the reaction Hydrolyzes single-stranded DNA or mismatched double-stranded DNA and polynucleotides, releasing free uracil.. Excises uracil residues from the DNA which can arise as a result of misincorporation of dUMP residues by DNA polymerase or due to deamination of cytosine. The sequence is that of Uracil-DNA glycosylase from Francisella tularensis subsp. novicida (strain U112).